The primary structure comprises 309 residues: Ribose-phosphate pyrophosphokinase (309 aa).

ATP is bound by residues 37-39 (DGE) and 96-97 (RQ). Residues histidine 130 and aspartate 169 each contribute to the Mg(2+) site. Residue lysine 192 is part of the active site. D-ribose 5-phosphate is bound by residues arginine 194, aspartate 218, and 222 to 226 (DTAGT).

This sequence belongs to the ribose-phosphate pyrophosphokinase family. Class I subfamily. Homohexamer. Requires Mg(2+) as cofactor.

It localises to the cytoplasm. It catalyses the reaction D-ribose 5-phosphate + ATP = 5-phospho-alpha-D-ribose 1-diphosphate + AMP + H(+). The protein operates within metabolic intermediate biosynthesis; 5-phospho-alpha-D-ribose 1-diphosphate biosynthesis; 5-phospho-alpha-D-ribose 1-diphosphate from D-ribose 5-phosphate (route I): step 1/1. In terms of biological role, involved in the biosynthesis of the central metabolite phospho-alpha-D-ribosyl-1-pyrophosphate (PRPP) via the transfer of pyrophosphoryl group from ATP to 1-hydroxyl of ribose-5-phosphate (Rib-5-P). In Helicobacter hepaticus (strain ATCC 51449 / 3B1), this protein is Ribose-phosphate pyrophosphokinase.